The primary structure comprises 293 residues: 4-diphosphocytidyl-2-C-methyl-D-erythritol kinase (293 aa).

The active site involves K16. ATP is bound at residue P99 to S109. Residue D141 is part of the active site.

The protein belongs to the GHMP kinase family. IspE subfamily.

The catalysed reaction is 4-CDP-2-C-methyl-D-erythritol + ATP = 4-CDP-2-C-methyl-D-erythritol 2-phosphate + ADP + H(+). It functions in the pathway isoprenoid biosynthesis; isopentenyl diphosphate biosynthesis via DXP pathway; isopentenyl diphosphate from 1-deoxy-D-xylulose 5-phosphate: step 3/6. Functionally, catalyzes the phosphorylation of the position 2 hydroxy group of 4-diphosphocytidyl-2C-methyl-D-erythritol. The protein is 4-diphosphocytidyl-2-C-methyl-D-erythritol kinase of Burkholderia cenocepacia (strain ATCC BAA-245 / DSM 16553 / LMG 16656 / NCTC 13227 / J2315 / CF5610) (Burkholderia cepacia (strain J2315)).